The sequence spans 190 residues: Probable E3 ubiquitin-protein ligase RHB1A (190 aa).

The RING-type; atypical zinc-finger motif lies at 139 to 180 (CPICFEDYDVENPRLTTKCEHEFHLSCLLEWIERSDRCPICD).

It catalyses the reaction S-ubiquitinyl-[E2 ubiquitin-conjugating enzyme]-L-cysteine + [acceptor protein]-L-lysine = [E2 ubiquitin-conjugating enzyme]-L-cysteine + N(6)-ubiquitinyl-[acceptor protein]-L-lysine.. It functions in the pathway protein modification; protein ubiquitination. Its function is as follows. Probable E3 ubiquitin-protein ligase that may possess E3 ubiquitin ligase activity in vitro. The sequence is that of Probable E3 ubiquitin-protein ligase RHB1A from Arabidopsis thaliana (Mouse-ear cress).